A 127-amino-acid chain; its full sequence is uncharacterized protein (127 aa).

This is an uncharacterized protein from Caenorhabditis elegans.